The primary structure comprises 149 residues: Large ribosomal subunit protein bL9 (149 aa).

Belongs to the bacterial ribosomal protein bL9 family.

Functionally, binds to the 23S rRNA. The chain is Large ribosomal subunit protein bL9 from Bacillus velezensis (strain DSM 23117 / BGSC 10A6 / LMG 26770 / FZB42) (Bacillus amyloliquefaciens subsp. plantarum).